The following is a 463-amino-acid chain: L-seryl-tRNA(Sec) selenium transferase (463 aa).

Lysine 295 is subject to N6-(pyridoxal phosphate)lysine.

Belongs to the SelA family. In terms of assembly, homodecamer; pentamer of dimers. Binds only one seryl-tRNA(Sec) per dimer. The cofactor is pyridoxal 5'-phosphate.

The protein localises to the cytoplasm. It carries out the reaction L-seryl-tRNA(Sec) + selenophosphate + H(+) = L-selenocysteinyl-tRNA(Sec) + phosphate. It functions in the pathway aminoacyl-tRNA biosynthesis; selenocysteinyl-tRNA(Sec) biosynthesis; selenocysteinyl-tRNA(Sec) from L-seryl-tRNA(Sec) (bacterial route): step 1/1. Functionally, converts seryl-tRNA(Sec) to selenocysteinyl-tRNA(Sec) required for selenoprotein biosynthesis. The polypeptide is L-seryl-tRNA(Sec) selenium transferase (Shigella flexneri serotype 5b (strain 8401)).